Here is a 400-residue protein sequence, read N- to C-terminus: Protein phosphatase methylesterase 1 (400 aa).

The segment at 1–72 (MSDLQRTWAK…NQKLFARPQG (72 aa)) is disordered. Positions 19 to 28 (PFDEPQEEQG) are enriched in acidic residues. The segment covering 44-54 (SSASSASSVSS) has biased composition (low complexity). Residues 55-64 (TGTIIPSPNQ) show a composition bias toward polar residues. Active-site residues include serine 202, aspartate 228, and histidine 358.

It belongs to the AB hydrolase superfamily.

The enzyme catalyses [phosphatase 2A protein]-C-terminal L-leucine methyl ester + H2O = [phosphatase 2A protein]-C-terminal L-leucine + methanol + H(+). Functionally, demethylates proteins that have been reversibly carboxymethylated. Demethylates the phosphatase PP2A catalytic subunit. The sequence is that of Protein phosphatase methylesterase 1 (PPE1) from Gibberella zeae (strain ATCC MYA-4620 / CBS 123657 / FGSC 9075 / NRRL 31084 / PH-1) (Wheat head blight fungus).